A 144-amino-acid polypeptide reads, in one-letter code: Large ribosomal subunit protein uL15 (144 aa).

The tract at residues 1–62 is disordered; that stretch reads MELNNLKPAE…GQMPLQRRLP (62 aa). The span at 21–31 shows a compositional bias: gly residues; sequence RGIGSGLGKTA.

This sequence belongs to the universal ribosomal protein uL15 family. Part of the 50S ribosomal subunit.

In terms of biological role, binds to the 23S rRNA. The protein is Large ribosomal subunit protein uL15 of Paraburkholderia phymatum (strain DSM 17167 / CIP 108236 / LMG 21445 / STM815) (Burkholderia phymatum).